The chain runs to 160 residues: MAVDSREKGKRGEYQVRDILRERTGLEWERVPGSGAFGQSHGLKGDIYLPPQSGHISKYCFEVKWYKDDNISSNLFNVGESTLEKWWQQCSREGEQMNSKPALIFKKDRGQWLIALDSSDPMVDNLMSRTHMVLNKKDMEIVIGLFEPWLHHASVEDLIK.

This is Protein D14 (D14) from Escherichia phage T5 (Enterobacteria phage T5).